A 371-amino-acid polypeptide reads, in one-letter code: NADP-dependent oxidoreductase lnaE (371 aa).

NADP(+) contacts are provided by residues 172 to 175, K198, Y214, N237, 277 to 283, and 307 to 309; these read DEIG, YGTIAEQ, and FGL.

Belongs to the NADP-dependent oxidoreductase L4BD family.

Its pathway is secondary metabolite biosynthesis. In terms of biological role, NADP-dependent oxidoreductase; part of the lna gene cluster that mediates the biosynthesis of diastereomeric piperazines. Lna and lnb clusters encode sets of enzymes that produce overlapping sets of previously undescribed metabolites such as piperazinomycin-like metabolites or morpholine. The lna and lnb biosynthetic pathways appear to be part of a signaling network that controls the formation of sclerotia, a resilient overwintering structure. One primary function of the non-canonical nonribosomal peptide synthetases lnaA and lnbA consists in the reduction of L-tyrosine. The presence in the clusters of tailoring enzymes such as the oxidoreductases lnaB, lnbB, lnaE or lnbE, as well as of the cytochrome P450 monooxygenases lnaC, lnaD, or lnbC, might explain formation of various diastereomeric piperazines. This chain is NADP-dependent oxidoreductase lnaE, found in Aspergillus flavus (strain ATCC 200026 / FGSC A1120 / IAM 13836 / NRRL 3357 / JCM 12722 / SRRC 167).